Consider the following 261-residue polypeptide: Cytochrome c oxidase subunit 3 (261 aa).

The Mitochondrial matrix portion of the chain corresponds to 1 to 15 (MAHQAHSYHMVDPSP). The chain crosses the membrane as a helical span at residues 16 to 34 (WPIFGAITALLTTSGLIMW). Residues 35-40 (FHYNSI) lie on the Mitochondrial intermembrane side of the membrane. The chain crosses the membrane as a helical span at residues 41-66 (ALLTAGLLSMLLVMIQWWRDVVREST). The Mitochondrial matrix portion of the chain corresponds to 67–72 (FQGHHT). The chain crosses the membrane as a helical span at residues 73-105 (PTVQKGLRYGMILFITSEAFFFLGFFWAFFHSS). Residues 106–128 (LAPTPELGGQWPPTGIKPLNPLE) are Mitochondrial intermembrane-facing. Residues 129–152 (VPLLNTAILLASGVTVTWAHHSIT) traverse the membrane as a helical segment. At 153 to 155 (EGN) the chain is on the mitochondrial matrix side. The chain crosses the membrane as a helical span at residues 156–183 (RKQAIHALTLTILLGFYFTALQAMEYHE). Over 184 to 190 (ASFSIAD) the chain is Mitochondrial intermembrane. A helical transmembrane segment spans residues 191–223 (SVYGSTFFVATGFHGLHVIIGSSFLTICLLRLI). At 224-232 (KFHFTSNHH) the chain is on the mitochondrial matrix side. The chain crosses the membrane as a helical span at residues 233–256 (FGFEAAAWYWHFVDIIWLFLYMSM). Over 257-261 (YWWGS) the chain is Mitochondrial intermembrane.

This sequence belongs to the cytochrome c oxidase subunit 3 family. As to quaternary structure, component of the cytochrome c oxidase (complex IV, CIV), a multisubunit enzyme composed of 14 subunits. The complex is composed of a catalytic core of 3 subunits MT-CO1, MT-CO2 and MT-CO3, encoded in the mitochondrial DNA, and 11 supernumerary subunits COX4I, COX5A, COX5B, COX6A, COX6B, COX6C, COX7A, COX7B, COX7C, COX8 and NDUFA4, which are encoded in the nuclear genome. The complex exists as a monomer or a dimer and forms supercomplexes (SCs) in the inner mitochondrial membrane with NADH-ubiquinone oxidoreductase (complex I, CI) and ubiquinol-cytochrome c oxidoreductase (cytochrome b-c1 complex, complex III, CIII), resulting in different assemblies (supercomplex SCI(1)III(2)IV(1) and megacomplex MCI(2)III(2)IV(2)).

It is found in the mitochondrion inner membrane. The enzyme catalyses 4 Fe(II)-[cytochrome c] + O2 + 8 H(+)(in) = 4 Fe(III)-[cytochrome c] + 2 H2O + 4 H(+)(out). Functionally, component of the cytochrome c oxidase, the last enzyme in the mitochondrial electron transport chain which drives oxidative phosphorylation. The respiratory chain contains 3 multisubunit complexes succinate dehydrogenase (complex II, CII), ubiquinol-cytochrome c oxidoreductase (cytochrome b-c1 complex, complex III, CIII) and cytochrome c oxidase (complex IV, CIV), that cooperate to transfer electrons derived from NADH and succinate to molecular oxygen, creating an electrochemical gradient over the inner membrane that drives transmembrane transport and the ATP synthase. Cytochrome c oxidase is the component of the respiratory chain that catalyzes the reduction of oxygen to water. Electrons originating from reduced cytochrome c in the intermembrane space (IMS) are transferred via the dinuclear copper A center (CU(A)) of subunit 2 and heme A of subunit 1 to the active site in subunit 1, a binuclear center (BNC) formed by heme A3 and copper B (CU(B)). The BNC reduces molecular oxygen to 2 water molecules using 4 electrons from cytochrome c in the IMS and 4 protons from the mitochondrial matrix. In Coturnix japonica (Japanese quail), this protein is Cytochrome c oxidase subunit 3 (MT-CO3).